The sequence spans 140 residues: Calcium-binding protein B (140 aa).

EF-hand domains lie at 38 to 73 (ATLS…INQP) and 74 to 109 (KTYL…KTSS). 5 residues coordinate Ca(2+): D51, N53, S55, D57, and E62.

This chain is Calcium-binding protein B (cbpB), found in Dictyostelium discoideum (Social amoeba).